Here is a 334-residue protein sequence, read N- to C-terminus: Chitin synthase export chaperone (334 aa).

The next 7 helical transmembrane spans lie at Ile49–Met69, Ile85–Gly105, Gly123–Tyr143, Leu159–Leu179, Val185–Met205, Leu220–Phe240, and Ile244–Leu264.

This sequence belongs to the CHS7 family.

The protein resides in the endoplasmic reticulum membrane. Its function is as follows. Chaperone required for the export of the chitin synthase chs3 from the endoplasmic reticulum. Plays a critical role in cell wall integrity and virulence. The sequence is that of Chitin synthase export chaperone from Fusarium oxysporum f. sp. lycopersici (strain 4287 / CBS 123668 / FGSC 9935 / NRRL 34936) (Fusarium vascular wilt of tomato).